Reading from the N-terminus, the 1135-residue chain is Envelopment polyprotein (1135 aa).

The signal sequence occupies residues 1–35; it reads MRILKLLELVVKVSLFTIALSSVLLAFLIFRATDA. The Lumenal portion of the chain corresponds to 36-314; it reads KVEIIRGDHP…KYSKSIYKQT (279 aa). A Cell attachment site motif is present at residues 41 to 43; the sequence is RGD. Intrachain disulfides connect Cys-114/Cys-145 and Cys-122/Cys-156. N-linked (GlcNAc...) asparagine; by host glycosylation occurs at Asn-116. The segment at 177-195 is non-covalent dimerization; the sequence is LDKKRHFSVGGKFFISESL. N-linked (GlcNAc...) asparagine; by host glycosylation occurs at Asn-210. The cysteines at positions 224 and 285 are disulfide-linked. The helical transmembrane segment at 315 to 366 threads the bilayer; that stretch reads ACINFSWIRLILIALLIYFPIRWLVNKTTKPLFLWYDLMGLITYPVLLLINC. Residues 367–484 are Cytoplasmic-facing; sequence LWKYFPLKCS…VPGCPFLVTS (118 aa). The interval 437 to 484 is signal for signal peptide peptidase; the sequence is LSLSLLKFVTEILIGLVILSQMPMSMAQTTQCLSGCFYVPGCPFLVTS. The Lumenal segment spans residues 485–1067; the sequence is KFEKCSEKDQ…YFGSFFDTIR (583 aa). Residues Asn-605 and Asn-980 are each glycosylated (N-linked (GlcNAc...) asparagine; by host). Residues 1068–1088 traverse the membrane as a helical segment; it reads VVLLIAFIFLVTYFCSILTSI. Topologically, residues 1089–1135 are cytoplasmic; that stretch reads CKGYVKNESYKSRSKIEDDDEPEIKAPMLMKDTMTRRRPPMDFSHLV.

The protein belongs to the tospovirus envelope glycoprotein family. In terms of assembly, homodimer; disulfide-linked. Heterodimer with Glycoprotein C. Interacts with nucleoprotein. Heterodimer with Glycoprotein N. Interacts with nucleoprotein. Post-translationally, specific enzymatic cleavages in vivo yield mature proteins including Glycoprotein N and Glycoprotein C. In terms of processing, glycosylated with O-linked glycans. Glycosylation is essential for proper subcellular location. Cleaved at acidic pH.

It localises to the virion membrane. It is found in the host Golgi apparatus membrane. The protein localises to the host endoplasmic reticulum membrane. Its function is as follows. Forms the spikes present at the surface of the virion together with Glycoprotein C. They are able to attach the virion to a cell receptor and to promote fusion of membranes after endocytosis of the virion. Plays a role in virus binding and/or entry into the vector midgut. Forms the spikes present at the surface of the virion together with Glycoprotein N. They are able to attach the virion to a cell receptor and to promote fusion of membranes after endocytosis of the virion. Probable class II fusion protein. The polypeptide is Envelopment polyprotein (GP) (Tomato spotted wilt virus (strain Brazilian Br-01) (TSWV)).